The primary structure comprises 327 residues: MKKIIKVEAVEKHFGNQVIIPPLSLDIKEGEFLTILGPSGCGKTTLLRMIAGFETPTKGNLLLDDEKINDLPPYKRHMNLVFQHYALFPHMNVEKNICFGMKMQKVPAAEQKERAEEAMRLTQLLEFRNRKPAKLSGGQQQRVAIARAIVNNPRVLLLDEPLGALDFKLRKDLQRELKNLQRNLGITFIYVTHDQEEAMSMSDRIVVMNKGHIEQIGTPKEIYNKPKTLFVATFIGENNIVKNGEGYVAIRPENVKVRSVEEPILKEYHLGHIEDIEFVGNMEKLYVRDEKTSELLMAYQTAEEAAQWSIGDNVYVGWEQEDEVTLN.

The ABC transporter domain maps to I5–I235. Residue G37–T44 participates in ATP binding.

This sequence belongs to the ABC transporter superfamily. Spermidine/putrescine importer (TC 3.A.1.11.1) family. As to quaternary structure, the complex is composed of two ATP-binding proteins (PotA), two transmembrane proteins (PotB and PotC) and a solute-binding protein (PotD).

It is found in the cell membrane. It catalyses the reaction ATP + H2O + polyamine-[polyamine-binding protein]Side 1 = ADP + phosphate + polyamineSide 2 + [polyamine-binding protein]Side 1.. Its function is as follows. Part of the ABC transporter complex PotABCD involved in spermidine/putrescine import. Responsible for energy coupling to the transport system. In Bacillus thuringiensis (strain Al Hakam), this protein is Spermidine/putrescine import ATP-binding protein PotA.